We begin with the raw amino-acid sequence, 186 residues long: TATA box-binding protein-like 1 (186 aa).

This sequence belongs to the TBP family.

Its subcellular location is the cytoplasm. It localises to the nucleus. Functionally, part of a specialized transcription system that mediates the transcription of most ribosomal proteins through the 5'-TCT-3' motif which is a core promoter element at these genes. Seems to also mediate the transcription of NF1. Does not bind the TATA box. Members of the TBP family are differentially required to regulate transcription and development during early embryogenesis. Particularly regulates genes that have a role in catabolism. The protein is TATA box-binding protein-like 1 (tbpl1) of Xenopus tropicalis (Western clawed frog).